We begin with the raw amino-acid sequence, 396 residues long: Acetate kinase (396 aa).

N7 provides a ligand contact to Mg(2+). ATP is bound at residue K14. R91 contributes to the substrate binding site. The Proton donor/acceptor role is filled by D148. ATP contacts are provided by residues H208–G212, D283–R285, and G331–N335. Mg(2+) is bound at residue E384.

This sequence belongs to the acetokinase family. As to quaternary structure, homodimer. Mg(2+) serves as cofactor. Mn(2+) is required as a cofactor.

It is found in the cytoplasm. It catalyses the reaction acetate + ATP = acetyl phosphate + ADP. Its pathway is metabolic intermediate biosynthesis; acetyl-CoA biosynthesis; acetyl-CoA from acetate: step 1/2. Functionally, catalyzes the formation of acetyl phosphate from acetate and ATP. Can also catalyze the reverse reaction. This chain is Acetate kinase, found in Desulforamulus reducens (strain ATCC BAA-1160 / DSM 100696 / MI-1) (Desulfotomaculum reducens).